The chain runs to 500 residues: Lysine--tRNA ligase (500 aa).

Positions 410 and 417 each coordinate Mg(2+).

The protein belongs to the class-II aminoacyl-tRNA synthetase family. Homodimer. It depends on Mg(2+) as a cofactor.

Its subcellular location is the cytoplasm. It carries out the reaction tRNA(Lys) + L-lysine + ATP = L-lysyl-tRNA(Lys) + AMP + diphosphate. The polypeptide is Lysine--tRNA ligase (Shewanella sp. (strain ANA-3)).